The primary structure comprises 452 residues: MKVISNFQNKKILILGLAKSGEAAAKLLTKLGALVTVNDSKPFDQNPAAQALLEEGIKVICGSHPVELLDEDFEYMVKNPGIPYDNPMVKRALAKEIPILTEVELAYFVSEAPIIGITGSNGKTTTTTMIADVLNAGGQSALLSGNIGYPASKVVQKAIAGDTLVMELSSFQLVGVNAFRPHIAVITNLMPTHLDYHGSFEDYVAAKWMIQAQMTESDYLILNANQEISATLAKTTKATVIPFSTQKVVDGAYLKDGILYFKEQAIIAATDLGVPGSHNIENALATIAVAKLSGIADDIIAQCLSHFGGVKHRLQRVGQIKDITFYNDSKSTNILATQKALSGFDNSRLILIAGGLDRGNEFDDLVPDLLGLKQMIILGESAERMKRAANKAEVSYLEARNVAEATELAFKLAQTGDTILLSPANASWDMYPNFEVRGDEFLATFDCLRGDA.

119-125 (GSNGKTT) contacts ATP.

Belongs to the MurCDEF family.

It localises to the cytoplasm. It catalyses the reaction UDP-N-acetyl-alpha-D-muramoyl-L-alanine + D-glutamate + ATP = UDP-N-acetyl-alpha-D-muramoyl-L-alanyl-D-glutamate + ADP + phosphate + H(+). It functions in the pathway cell wall biogenesis; peptidoglycan biosynthesis. Its function is as follows. Cell wall formation. Catalyzes the addition of glutamate to the nucleotide precursor UDP-N-acetylmuramoyl-L-alanine (UMA). This is UDP-N-acetylmuramoylalanine--D-glutamate ligase from Streptococcus pyogenes serotype M28 (strain MGAS6180).